Consider the following 620-residue polypeptide: Membrane protein insertase YidC (620 aa).

Residues 7-27 form a helical membrane-spanning segment; the sequence is NYLIAIALSVMVVLGWQFFYM. Residues 37–58 are compositionally biased toward low complexity; sequence AEQAQQAQQAKTPATQATPGAA. The tract at residues 37–77 is disordered; that stretch reads AEQAQQAQQAKTPATQATPGAAVNGALPGQTQASATTSRED. 4 helical membrane passes run 399–419, 469–489, 514–534, and 560–580; these read FGVAILLTTIAVKLLFFPLAS, WPLLLQIPVFFALYKVIYITI, LFGLLPFESPAMLHLGIWPII, and WMPLVFTFMLGSFPAGLVIYW.

Belongs to the OXA1/ALB3/YidC family. Type 1 subfamily. Interacts with the Sec translocase complex via SecD. Specifically interacts with transmembrane segments of nascent integral membrane proteins during membrane integration.

Its subcellular location is the cell inner membrane. Its function is as follows. Required for the insertion and/or proper folding and/or complex formation of integral membrane proteins into the membrane. Involved in integration of membrane proteins that insert both dependently and independently of the Sec translocase complex, as well as at least some lipoproteins. Aids folding of multispanning membrane proteins. The chain is Membrane protein insertase YidC from Allorhizobium ampelinum (strain ATCC BAA-846 / DSM 112012 / S4) (Agrobacterium vitis (strain S4)).